A 250-amino-acid polypeptide reads, in one-letter code: Probable transcriptional regulatory protein tll0175 (250 aa).

This sequence belongs to the TACO1 family.

It is found in the cytoplasm. This is Probable transcriptional regulatory protein tll0175 from Thermosynechococcus vestitus (strain NIES-2133 / IAM M-273 / BP-1).